The sequence spans 269 residues: MKRSDKYTDDYIEQRYESQRPHYNTYYQPIGKPPKKKKSKRIFLKAIITILILLIIFFGVMYFISSRANVDDLKSIENKSDFVATENMPNYVKGAFISMEDERFYKHHGFDIKGTTRALFSTISDRDVQGGSTITQQVVKNYYYDNERSFTRKIKELFVARKVEKQYSKNQILSFYMNNIYYGDNQYTVEGAANHYFGVTVDKNNSNMSQISVLQSAILASKVNAPSVYDVNDMSNNYINRVKTNLEKMKQQNFISESQYQEAMSQLGN.

A helical membrane pass occupies residues 46–66; that stretch reads AIITILILLIIFFGVMYFISS.

Belongs to the glycosyltransferase 51 family.

It is found in the cell membrane. It catalyses the reaction [GlcNAc-(1-&gt;4)-Mur2Ac(oyl-L-Ala-gamma-D-Glu-L-Lys-D-Ala-D-Ala)](n)-di-trans,octa-cis-undecaprenyl diphosphate + beta-D-GlcNAc-(1-&gt;4)-Mur2Ac(oyl-L-Ala-gamma-D-Glu-L-Lys-D-Ala-D-Ala)-di-trans,octa-cis-undecaprenyl diphosphate = [GlcNAc-(1-&gt;4)-Mur2Ac(oyl-L-Ala-gamma-D-Glu-L-Lys-D-Ala-D-Ala)](n+1)-di-trans,octa-cis-undecaprenyl diphosphate + di-trans,octa-cis-undecaprenyl diphosphate + H(+). It participates in cell wall biogenesis; peptidoglycan biosynthesis. Its function is as follows. Peptidoglycan polymerase that catalyzes glycan chain elongation using lipid-linked disaccharide-pentapeptide as the substrate. In Staphylococcus epidermidis (strain ATCC 35984 / DSM 28319 / BCRC 17069 / CCUG 31568 / BM 3577 / RP62A), this protein is Monofunctional glycosyltransferase.